Here is a 196-residue protein sequence, read N- to C-terminus: Holliday junction branch migration complex subunit RuvA (196 aa).

The tract at residues 1-63 is domain I; it reads MINKICGKIV…EDEIRLFGFL (63 aa). Residues 64–135 form a domain II region; that stretch reads NVSEREVFEK…KLRGKLVKVN (72 aa). The tract at residues 135–138 is flexible linker; sequence NEAS. The segment at 139–196 is domain III; sequence SGVLKFKELEQSIVNMGFDRKLVAAAIKEIMLIDEFLMLRQVDQEQFLFREILRKLSG.

This sequence belongs to the RuvA family. Homotetramer. Forms an RuvA(8)-RuvB(12)-Holliday junction (HJ) complex. HJ DNA is sandwiched between 2 RuvA tetramers; dsDNA enters through RuvA and exits via RuvB. An RuvB hexamer assembles on each DNA strand where it exits the tetramer. Each RuvB hexamer is contacted by two RuvA subunits (via domain III) on 2 adjacent RuvB subunits; this complex drives branch migration. In the full resolvosome a probable DNA-RuvA(4)-RuvB(12)-RuvC(2) complex forms which resolves the HJ.

Its subcellular location is the cytoplasm. Its function is as follows. The RuvA-RuvB-RuvC complex processes Holliday junction (HJ) DNA during genetic recombination and DNA repair, while the RuvA-RuvB complex plays an important role in the rescue of blocked DNA replication forks via replication fork reversal (RFR). RuvA specifically binds to HJ cruciform DNA, conferring on it an open structure. The RuvB hexamer acts as an ATP-dependent pump, pulling dsDNA into and through the RuvAB complex. HJ branch migration allows RuvC to scan DNA until it finds its consensus sequence, where it cleaves and resolves the cruciform DNA. The chain is Holliday junction branch migration complex subunit RuvA from Borrelia turicatae (strain 91E135).